Here is a 254-residue protein sequence, read N- to C-terminus: Probable pectate lyase E (254 aa).

The N-terminal stretch at Met1 to Ala17 is a signal peptide. N-linked (GlcNAc...) asparagine glycosylation is present at Asn175. Residues Asp228 to Cys254 are disordered.

It belongs to the polysaccharide lyase 3 family. The cofactor is Ca(2+).

It is found in the secreted. The enzyme catalyses Eliminative cleavage of (1-&gt;4)-alpha-D-galacturonan to give oligosaccharides with 4-deoxy-alpha-D-galact-4-enuronosyl groups at their non-reducing ends.. Its function is as follows. Pectinolytic enzyme consist of four classes of enzymes: pectin lyase, polygalacturonase, pectin methylesterase and rhamnogalacturonase. Among pectinolytic enzymes, pectin lyase is the most important in depolymerization of pectin, since it cleaves internal glycosidic bonds of highly methylated pectins. Favors pectate, the anion, over pectin, the methyl ester. This is Probable pectate lyase E (plyE) from Aspergillus fumigatus (strain ATCC MYA-4609 / CBS 101355 / FGSC A1100 / Af293) (Neosartorya fumigata).